Consider the following 125-residue polypeptide: Large ribosomal subunit protein eL8 (125 aa).

Belongs to the eukaryotic ribosomal protein eL8 family. In terms of assembly, part of the 50S ribosomal subunit. Probably part of the RNase P complex.

The protein resides in the cytoplasm. Functionally, multifunctional RNA-binding protein that recognizes the K-turn motif in ribosomal RNA, the RNA component of RNase P, box H/ACA, box C/D and box C'/D' sRNAs. The sequence is that of Large ribosomal subunit protein eL8 from Metallosphaera sedula (strain ATCC 51363 / DSM 5348 / JCM 9185 / NBRC 15509 / TH2).